A 717-amino-acid polypeptide reads, in one-letter code: PAN2-PAN3 deadenylation complex subunit PAN3 (717 aa).

A C3H1-type zinc finger spans residues 8 to 37; the sequence is WARDVPCRNVIIYGFCKKKTEGCPFKHDDD. The tract at residues 37–100 is disordered; sequence DDIATPTSTP…HTGSKSQVPK (64 aa). Low complexity predominate over residues 62-90; it reads PSKISVSSLPSLNSQPSSTAPTSAPNATA. A compositionally biased stretch (polar residues) spans 91-100; the sequence is HTGSKSQVPK. The interval 323–585 is pseudokinase domain; the sequence is QLFPSGGNLP…ATIIEKYIGL (263 aa). Residues arginine 378, 428–435, and 482–483 each bind ATP; these read DYYPNATS and DK. The stretch at 586-624 forms a coiled coil; it reads DVVFKVMEAQQTYSEYAENVLSRELENGRLFRLICKLNF. The tract at residues 625 to 717 is knob domain; sequence IFGRVENRLD…VDKTFRAMTL (93 aa).

This sequence belongs to the protein kinase superfamily. PAN3 family. In terms of assembly, homodimer. Forms a heterotrimer with a catalytic subunit PAN2 to form the poly(A)-nuclease (PAN) deadenylation complex. Interacts (via PAM-2 motif) with poly(A)-binding protein PAB1 (via PABC domain), conferring substrate specificity of the enzyme complex.

The protein resides in the cytoplasm. In terms of biological role, regulatory subunit of the poly(A)-nuclease (PAN) deadenylation complex, one of two cytoplasmic mRNA deadenylases involved in mRNA turnover. PAN specifically shortens poly(A) tails of RNA and the activity is stimulated by poly(A)-binding protein PAB1. PAN deadenylation is followed by rapid degradation of the shortened mRNA tails by the CCR4-NOT complex. Deadenylated mRNAs are then degraded by two alternative mechanisms, namely exosome-mediated 3'-5' exonucleolytic degradation, or deadenylation-dependent mRNA decaping and subsequent 5'-3' exonucleolytic degradation by XRN1. May also be involved in post-transcriptional maturation of mRNA poly(A) tails. PAN3 acts as a positive regulator for PAN activity, recruiting the catalytic subunit PAN2 to mRNA via its interaction with RNA and with PAB1. The sequence is that of PAN2-PAN3 deadenylation complex subunit PAN3 from Candida glabrata (strain ATCC 2001 / BCRC 20586 / JCM 3761 / NBRC 0622 / NRRL Y-65 / CBS 138) (Yeast).